The following is a 387-amino-acid chain: Galactokinase (387 aa).

A substrate-binding site is contributed by 32–35; that stretch reads EHTD. Residues Ser-66 and 123 to 129 contribute to the ATP site; that span reads GAGLSSS. The Mg(2+) site is built by Ser-129 and Glu-161. The Proton acceptor role is filled by Asp-173. Tyr-223 provides a ligand contact to substrate.

It belongs to the GHMP kinase family. GalK subfamily.

The protein localises to the cytoplasm. It catalyses the reaction alpha-D-galactose + ATP = alpha-D-galactose 1-phosphate + ADP + H(+). The protein operates within carbohydrate metabolism; galactose metabolism. Functionally, catalyzes the transfer of the gamma-phosphate of ATP to D-galactose to form alpha-D-galactose-1-phosphate (Gal-1-P). The polypeptide is Galactokinase (Enterococcus faecalis (strain ATCC 700802 / V583)).